The primary structure comprises 278 residues: Adenylate kinase (278 aa).

50-55 (GAGKGT) lines the ATP pocket. Residues 70–99 (ATGDMLRAQVAKGTALGKQAKKIMNEGGLV) are NMP. AMP-binding positions include threonine 71, arginine 76, 97–99 (GLV), 126–129 (GFPR), and glutamine 133. Residues 167–204 (GRLVHPASGRSYHRIFNPPKDDMKDDITGEPLVQRSDD) are LID. ATP is bound by residues arginine 168 and 177 to 178 (SY). AMP contacts are provided by arginine 201 and arginine 212. Glutamine 240 is an ATP binding site.

This sequence belongs to the adenylate kinase family. AK2 subfamily. In terms of assembly, monomer.

It is found in the cytoplasm. Its subcellular location is the cytosol. It localises to the mitochondrion intermembrane space. It carries out the reaction AMP + ATP = 2 ADP. Its function is as follows. Catalyzes the reversible transfer of the terminal phosphate group between ATP and AMP. Plays an important role in cellular energy homeostasis and in adenine nucleotide metabolism. Adenylate kinase activity is critical for regulation of the phosphate utilization and the AMP de novo biosynthesis pathways. The chain is Adenylate kinase (adk-1) from Neurospora crassa (strain ATCC 24698 / 74-OR23-1A / CBS 708.71 / DSM 1257 / FGSC 987).